Reading from the N-terminus, the 117-residue chain is Large ribosomal subunit protein bL20 (117 aa).

Belongs to the bacterial ribosomal protein bL20 family.

Functionally, binds directly to 23S ribosomal RNA and is necessary for the in vitro assembly process of the 50S ribosomal subunit. It is not involved in the protein synthesizing functions of that subunit. The polypeptide is Large ribosomal subunit protein bL20 (Pasteurella multocida (strain Pm70)).